Here is a 2567-residue protein sequence, read N- to C-terminus: Highly reducing polyketide synthase sor1 (2567 aa).

One can recognise a Ketosynthase family 3 (KS3) domain in the interval 14–436 (SEPIAIIGMS…GANAHIILED (423 aa)). Active-site for beta-ketoacyl synthase activity residues include Cys187, His322, and His359. The segment at 550-841 (VFTGQGAQWW…VVEVGPHTAL (292 aa)) is malonyl-CoA:ACP transacylase (MAT) domain. The N-terminal hotdog fold stretch occupies residues 939 to 1079 (HHLLGSLVEG…GLISIEFEAS (141 aa)). The segment at 939-1249 (HHLLGSLVEG…GFSYQSLGRS (311 aa)) is dehydratase (DH) domain. The PKS/mFAS DH domain occupies 939-1252 (HHLLGSLVEG…YQSLGRSVSL (314 aa)). His971 functions as the Proton acceptor; for dehydratase activity in the catalytic mechanism. The interval 1095 to 1252 (YKRQIPPAQL…YQSLGRSVSL (158 aa)) is C-terminal hotdog fold. Catalysis depends on Asp1161, which acts as the Proton donor; for dehydratase activity. The methyltransferase (CMet) domain stretch occupies residues 1426–1534 (LEIGASTGGI…RSLLKPGGTL (109 aa)). An enoyl reductase (ER) domain region spans residues 1852–2163 (FLPELLVFGD…TEEETGKRVL (312 aa)). The tract at residues 2187-2369 (ASYLIVGGNG…AVSIDLSLVD (183 aa)) is ketoreductase (KR) domain. Residues 2481–2558 (EAISVVGSAV…QLVANVVDRS (78 aa)) enclose the Carrier domain. Ser2518 bears the O-(pantetheine 4'-phosphoryl)serine mark.

It participates in secondary metabolite biosynthesis. In terms of biological role, highly reducing polyketide synthase; part of the SOR gene cluster that mediates the biosynthesis of sorbicillinoids, a diverse group of yellow secondary metabolites that restrict growth of competing pathogenic fungi but not of bacteria. Sorbicillinoids biosynthesis requires the action of two PKSs. The SOR cluster is required for the production of trichodimerol and dihydrotrichotetronin, with sor2 being sufficient for production of trichodimerol, but not dihydrotrichotetronin in the light. Sor1 iteratively combines three acetyl units and the growing chain is modified by the ketoacyl reductase subunit, and optional by the enoyl reductase subunit in the second cycle. The polyketide is then handed over to the PKS sor2, which adds three more acetyl units, and two methyl groups. Sor2 releases an aldehyde, which undergoes spontaneous cyclization resulting in the formation of sorbicillin or 2',3'-dihydrosorbicillin. The monooxygenase sor5 oxidizes sorbicillin and 2',3'-dihydrosorbicillin to 2',3'-dihydrosorbicillinol and sorbicillinol, respectively. The oxidoreductase sor8 further converts sorbicillinol into oxosorbicillinol. Sorbicillinol is the building block for the other sorbicillinoids such as disorbicillinol, bisvertinolon, dihydrobisvertinolone, and dihydrotrichotetronine. This Hypocrea jecorina (strain QM6a) (Trichoderma reesei) protein is Highly reducing polyketide synthase sor1.